A 175-amino-acid polypeptide reads, in one-letter code: Large ribosomal subunit protein uL10 (175 aa).

This sequence belongs to the universal ribosomal protein uL10 family. In terms of assembly, part of the ribosomal stalk of the 50S ribosomal subunit. The N-terminus interacts with L11 and the large rRNA to form the base of the stalk. The C-terminus forms an elongated spine to which L12 dimers bind in a sequential fashion forming a multimeric L10(L12)X complex.

Its function is as follows. Forms part of the ribosomal stalk, playing a central role in the interaction of the ribosome with GTP-bound translation factors. The chain is Large ribosomal subunit protein uL10 from Synechococcus sp. (strain WH7803).